The chain runs to 149 residues: UPF0178 protein VC0395_A0405/VC395_0897 (149 aa).

This sequence belongs to the UPF0178 family.

The protein is UPF0178 protein VC0395_A0405/VC395_0897 of Vibrio cholerae serotype O1 (strain ATCC 39541 / Classical Ogawa 395 / O395).